The following is a 424-amino-acid chain: Vasopressin V1a receptor (424 aa).

The segment at 1–40 is disordered; that stretch reads MSFPRGSQDRSVGNSSPWWPLTTEGSNGSQEAARLGEGDS. Over 1 to 52 the chain is Extracellular; it reads MSFPRGSQDRSVGNSSPWWPLTTEGSNGSQEAARLGEGDSPLGDVRNEELAK. A compositionally biased stretch (polar residues) spans 9-30; that stretch reads DRSVGNSSPWWPLTTEGSNGSQ. An N-linked (GlcNAc...) asparagine glycan is attached at Asn27. The chain crosses the membrane as a helical span at residues 53 to 76; the sequence is LEIAVLAVIFVVAVLGNSSVLLAL. Residues 77–88 lie on the Cytoplasmic side of the membrane; that stretch reads HRTPRKTSRMHL. A helical membrane pass occupies residues 89 to 110; it reads FIRHLSLADLAVAFFQVLPQLC. Over 111 to 125 the chain is Extracellular; it reads WDITYRFRGPDWLCR. Cys124 and Cys205 are disulfide-bonded. Residues 126–147 form a helical membrane-spanning segment; that stretch reads VVKHLQVFAMFASAYMLVVMTA. The Cytoplasmic segment spans residues 148–168; it reads DRYIAVCHPLKTLQQPARRSR. The helical transmembrane segment at 169 to 190 threads the bilayer; sequence LMIATSWVLSFILSTPQYFIFS. Residues 191 to 220 are Extracellular-facing; sequence VIEIEVNNGTKTQDCWATFIQPWGTRAYVT. Residues 221-241 form a helical membrane-spanning segment; the sequence is WMTSGVFVAPVVVLGTCYGFI. At 242 to 299 the chain is on the cytoplasmic side; the sequence is CYHIWRNIRGKTASSRHSKGDKGSGEAVGPFHKGLLVTPCVSSVKSISRAKIRTVKMT. A helical transmembrane segment spans residues 300-319; it reads FVIVSAYILCWAPFFIVQMW. Residues 320–337 are Extracellular-facing; sequence SVWDENFIWTDSENPSIT. Residues 338–357 form a helical membrane-spanning segment; it reads ITALLASLNSCCNPWIYMFF. The Cytoplasmic segment spans residues 358–424; that stretch reads SGHLLQDCVQ…KSIRFIPVST (67 aa). 2 S-palmitoyl cysteine lipidation sites follow: Cys371 and Cys372. The interval 383-416 is disordered; sequence DSDSMSRRQTSYSNNRSPTNSTGMWKDSPKSSKS. A compositionally biased stretch (polar residues) spans 389-405; sequence RRQTSYSNNRSPTNSTG. The residue at position 410 (Ser410) is a Phosphoserine.

Belongs to the G-protein coupled receptor 1 family. Vasopressin/oxytocin receptor subfamily. Post-translationally, palmitoylated on three cysteine residues, of which only two are identified. As to expression, localized within gonadotropes of the anterior pituitary of the brain. Broadly distributed throughout the cerebral cortex.

It localises to the cell membrane. Its subcellular location is the cytoplasmic vesicle membrane. Functionally, receptor for arginine vasopressin. The activity of this receptor is mediated by G proteins which activate a phosphatidyl-inositol-calcium second messenger system. Involved in social memory formation. This is Vasopressin V1a receptor (Avpr1a) from Rattus norvegicus (Rat).